A 157-amino-acid chain; its full sequence is Tripartite terminase subunit 2 (157 aa).

The tract at residues methionine 1–aspartate 69 is disordered. Over residues leucine 11 to aspartate 27 the composition is skewed to acidic residues.

Belongs to the herpesviridae TRM2 protein family. Associates with TRM1 and TRM3 to form the tripartite terminase complex.

It is found in the host nucleus. Component of the molecular motor that translocates viral genomic DNA in empty capsid during DNA packaging. Forms a tripartite terminase complex together with TRM1 and TRM3 in the host cytoplasm. Once the complex reaches the host nucleus, it interacts with the capsid portal vertex. This portal forms a ring in which genomic DNA is translocated into the capsid. The protein is Tripartite terminase subunit 2 of Homo sapiens (Human).